The chain runs to 290 residues: Protease HtpX homolog (290 aa).

A run of 2 helical transmembrane segments spans residues 4-24 (ILLFVLTNVMVVAVLGIVASL) and 39-59 (TALLGFALVMGFGGAIISLLI). Residue His144 coordinates Zn(2+). The active site involves Glu145. Residue His148 coordinates Zn(2+). 2 helical membrane-spanning segments follow: residues 159-179 (LIQGVMNTFVVFLSRVIGYAV) and 199-219 (VSTIVLDIVLGFAAAIVVAWF). Glu224 is a Zn(2+) binding site.

This sequence belongs to the peptidase M48B family. Zn(2+) is required as a cofactor.

It is found in the cell inner membrane. The protein is Protease HtpX homolog of Variovorax paradoxus (strain S110).